The primary structure comprises 449 residues: Bifunctional protein GlmU (449 aa).

The segment at 1–230 (MASSKLAVIV…EAELLGVNAR (230 aa)) is pyrophosphorylase. UDP-N-acetyl-alpha-D-glucosamine is bound by residues 11–14 (LAAG), K25, Q74, 79–80 (GT), 102–104 (YGD), G142, E156, N171, and N228. Residue D104 coordinates Mg(2+). N228 contacts Mg(2+). The linker stretch occupies residues 231–251 (SELAVAEALVQARLREAAMDN). The interval 252–449 (GATLIDPATV…QQAAKKAKKD (198 aa)) is N-acetyltransferase. UDP-N-acetyl-alpha-D-glucosamine-binding residues include R317 and K335. H347 acts as the Proton acceptor in catalysis. Residues Y350 and N361 each contribute to the UDP-N-acetyl-alpha-D-glucosamine site. Acetyl-CoA is bound by residues A364, 370 to 371 (NY), S389, A407, and R424.

In the N-terminal section; belongs to the N-acetylglucosamine-1-phosphate uridyltransferase family. This sequence in the C-terminal section; belongs to the transferase hexapeptide repeat family. As to quaternary structure, homotrimer. Mg(2+) serves as cofactor.

It is found in the cytoplasm. It carries out the reaction alpha-D-glucosamine 1-phosphate + acetyl-CoA = N-acetyl-alpha-D-glucosamine 1-phosphate + CoA + H(+). The catalysed reaction is N-acetyl-alpha-D-glucosamine 1-phosphate + UTP + H(+) = UDP-N-acetyl-alpha-D-glucosamine + diphosphate. It functions in the pathway nucleotide-sugar biosynthesis; UDP-N-acetyl-alpha-D-glucosamine biosynthesis; N-acetyl-alpha-D-glucosamine 1-phosphate from alpha-D-glucosamine 6-phosphate (route II): step 2/2. Its pathway is nucleotide-sugar biosynthesis; UDP-N-acetyl-alpha-D-glucosamine biosynthesis; UDP-N-acetyl-alpha-D-glucosamine from N-acetyl-alpha-D-glucosamine 1-phosphate: step 1/1. It participates in bacterial outer membrane biogenesis; LPS lipid A biosynthesis. Its function is as follows. Catalyzes the last two sequential reactions in the de novo biosynthetic pathway for UDP-N-acetylglucosamine (UDP-GlcNAc). The C-terminal domain catalyzes the transfer of acetyl group from acetyl coenzyme A to glucosamine-1-phosphate (GlcN-1-P) to produce N-acetylglucosamine-1-phosphate (GlcNAc-1-P), which is converted into UDP-GlcNAc by the transfer of uridine 5-monophosphate (from uridine 5-triphosphate), a reaction catalyzed by the N-terminal domain. This Paramagnetospirillum magneticum (strain ATCC 700264 / AMB-1) (Magnetospirillum magneticum) protein is Bifunctional protein GlmU.